Here is a 1435-residue protein sequence, read N- to C-terminus: Protein SPP41 (1435 aa).

Disordered stretches follow at residues 16–74 (VGNL…NIEI), 88–265 (VANA…ENTL), 286–309 (AKQT…VEAQ), 322–424 (ELLS…DDEF), 442–482 (ETST…DSLD), 519–708 (SVSD…MKVP), and 934–972 (QQLD…AGHT). Residues 27 to 42 (GQEEGEVQGGEQEGDD) show a composition bias toward acidic residues. Composition is skewed to basic and acidic residues over residues 53–63 (IEPKHPDDSQH), 98–127 (EQAK…KEQQ), and 139–154 (LKSD…ERRV). The UIM domain maps to 171 to 190 (QDDENLRMAILESLQELNTN). A compositionally biased stretch (basic and acidic residues) spans 196-205 (EPEKHEHAAP). Positions 211–223 (SKKSSKKKKKDKS) are enriched in basic residues. The segment covering 224 to 234 (KNRESSKDKSS) has biased composition (basic and acidic residues). A compositionally biased stretch (basic residues) spans 235–249 (KKSKSSSHSKKHAKD). A compositionally biased stretch (polar residues) spans 286–301 (AKQTVDIQDNSHTDNT). Residues 345-355 (KAVEPPRKPTA) show a composition bias toward basic and acidic residues. Over residues 367–383 (KPKKRPPQEKKKTKSKT) the composition is skewed to basic residues. The span at 384–398 (SKAASTANKSPASES) shows a compositional bias: low complexity. Composition is skewed to polar residues over residues 442-451 (ETSTHTATQD) and 459-482 (DFTS…DSLD). Basic and acidic residues-rich tracts occupy residues 524–548 (LPHD…EKKT), 610–628 (KNKE…AREE), and 637–652 (KQRL…KIVE). Residues 665–674 (KSGKPKKPYR) are compositionally biased toward basic residues. Over residues 676–691 (WTPEELLKRSQEAEKP) the composition is skewed to basic and acidic residues. The Nuclear localization signal motif lies at 683-699 (KRSQEAEKPRKVKKERK). Residues 692–706 (RKVKKERKKKEKKMK) are compositionally biased toward basic residues. Lys981 is covalently cross-linked (Glycyl lysine isopeptide (Lys-Gly) (interchain with G-Cter in SUMO)). Over residues 1005–1014 (KLELTKRAES) the composition is skewed to basic and acidic residues. Positions 1005–1125 (KLELTKRAES…DSVNTTTGKP (121 aa)) are disordered. Ser1014 is modified (phosphoserine). The span at 1021-1032 (NVETAKETQSVQ) shows a compositional bias: polar residues. Basic and acidic residues-rich tracts occupy residues 1033-1082 (EIKE…EKIA) and 1091-1103 (LSDK…KSTL). Phosphoserine is present on Ser1067. Residues 1108–1123 (AQLTGNEPDSVNTTTG) are compositionally biased toward polar residues. Lys1154 participates in a covalent cross-link: Glycyl lysine isopeptide (Lys-Gly) (interchain with G-Cter in SUMO).

Interacts with PRP8 and RAP1.

Its subcellular location is the nucleus. Negative regulator of PRP3 and PRP4 genes. This is Protein SPP41 (SPP41) from Saccharomyces cerevisiae (strain ATCC 204508 / S288c) (Baker's yeast).